We begin with the raw amino-acid sequence, 204 residues long: High frequency lysogenization protein HflD homolog (204 aa).

It belongs to the HflD family.

The protein resides in the cytoplasm. The protein localises to the cell inner membrane. This chain is High frequency lysogenization protein HflD homolog, found in Xylella fastidiosa (strain M23).